The sequence spans 114 residues: Snake venom vascular endothelial growth factor (114 aa).

Glutamine 1 is modified (pyrrolidone carboxylic acid). Cystine bridges form between cysteine 14–cysteine 56, cysteine 45–cysteine 91, and cysteine 49–cysteine 93. Residues 92–114 (ECRPGSTVNNGKRKKNPKEGEPR) form a disordered region.

This sequence belongs to the PDGF/VEGF growth factor family. Snake venom VEGF subfamily. In terms of assembly, homodimer; disulfide-linked. Interacts with human VEGF receptor 1/FLT1. Interacts with human VEGF receptor 2/KDR. In terms of tissue distribution, expressed by venom gland.

The protein localises to the secreted. In terms of biological role, snake venom vascular endothelial growth factor (svVEGF) that may contribute to venom dispersion and prey subjugation by inducing vascular permeability and hypotension. Induces an increase in capillary permeability after intradermal injection, as well as a drastic hypotensive effect after intravenous injection. The hypotension is mediated by nitric oxide (NO), which is produced by VEGF-activated endothelium NO synthase. Induces angiogenesis and migration of human vascular endothelial cells in vitro. Exhibits angiogenic activity by inducing human umbilical vein endothelial cells (HUVEC) to develop vessels in vitro. Induces cellular migration of HUVEC cells towards a wound in scratch assays, enhancing wound closure after 12 h by 49.5%. Induces dose-dependent leukocyte recruitment to the peritoneal cavity leading to increased vascular permeability in mice. This Crotalus durissus terrificus (South American rattlesnake) protein is Snake venom vascular endothelial growth factor.